We begin with the raw amino-acid sequence, 26 residues long: Maculatin-3.1 (26 aa).

Alanine 26 carries the alanine amide modification.

Expressed by the skin dorsal glands.

It localises to the secreted. Its function is as follows. Shows antibacterial activity against S.uberis. The chain is Maculatin-3.1 from Ranoidea genimaculata (Brown-spotted tree frog).